The chain runs to 97 residues: uncharacterized protein (97 aa).

Residues 1-16 (MKQTVLLLFTALFLSG) form the signal peptide. A lipid anchor (N-palmitoyl cysteine) is attached at cysteine 17. The S-diacylglycerol cysteine moiety is linked to residue cysteine 17.

The protein localises to the cell membrane. This is an uncharacterized protein from Bacillus subtilis (strain 168).